A 287-amino-acid chain; its full sequence is tRNA (guanine(9)-N1)-methyltransferase (287 aa).

The segment at 1-27 (MSDTSDLVDGKWQRLPPVPEGMSKSQW) is disordered. The SAM-dependent MTase TRM10-type domain occupies 79-272 (EPRVNRDQVA…SVIPSRKLDP (194 aa)). Residues 179 to 180 (LT), Gly199, 203 to 207 (DKNRH), Cys211, Leu225, and 237 to 239 (KVL) contribute to the S-adenosyl-L-methionine site. Asp203 serves as the catalytic Proton acceptor. A compositionally biased stretch (basic and acidic residues) spans 268-278 (RKLDPVKEKEQ). The interval 268-287 (RKLDPVKEKEQQQQQQQQQQ) is disordered.

Belongs to the class IV-like SAM-binding methyltransferase superfamily. TRM10 family. In terms of assembly, monomer.

Its subcellular location is the cytoplasm. It is found in the nucleus. It catalyses the reaction guanosine(9) in tRNA + S-adenosyl-L-methionine = N(1)-methylguanosine(9) in tRNA + S-adenosyl-L-homocysteine + H(+). S-adenosyl-L-methionine-dependent guanine N(1)-methyltransferase that catalyzes the formation of N(1)-methylguanine at position 9 (m1G9) in cytoplasmic tRNA. In Candida glabrata (strain ATCC 2001 / BCRC 20586 / JCM 3761 / NBRC 0622 / NRRL Y-65 / CBS 138) (Yeast), this protein is tRNA (guanine(9)-N1)-methyltransferase.